Reading from the N-terminus, the 1221-residue chain is X-linked retinitis pigmentosa GTPase regulator-interacting protein 1 (1221 aa).

Polar residues-rich tracts occupy residues 1-15 (MIPTSKGKNTKTQPP) and 88-97 (GGTAPSSTSV). Disordered regions lie at residues 1–22 (MIPTSKGKNTKTQPPLSRMTRD), 68–107 (AEAAADESSGSPLNGGGTESGGTAPSSTSVPRCPGSSCSS), and 119–196 (SLAS…PEKM). 2 stretches are compositionally biased toward basic and acidic residues: residues 134 to 147 (HRAEKPKRESRDRL) and 155 to 168 (FKEHVTNEKARGEV). A coiled-coil region spans residues 267 to 533 (LGAAHNALLS…EEQLKDVAYG (267 aa)). A C2 domain is found at 723-843 (QKDEPRSGTW…AQNKSIQGDF (121 aa)). Residues 869–947 (PENFPKPEAQ…YSRRKHGRKT (79 aa)) are disordered. Polar residues predominate over residues 903-914 (QMVSIDTPTEAG). The segment at 1027–1216 (SEAQTTDSDE…ALQAIYKEMT (190 aa)) is interaction with RPGR.

Belongs to the RPGRIP1 family. Forms homodimers and elongated homopolymers. Interacts with NPHP4. Interacts with NEK4. Interacts with RPGR. Interacts with SPATA7. Interacts with CEP290/NPHP6; mediating the association between RPGR and CEP290/NPHP6. In terms of tissue distribution, retina, brain, skeletal muscle and kidney. Colocalizes with RGPR in the outer segment of rod photoreceptors and cone outer segments.

Its subcellular location is the cell projection. The protein resides in the cilium. Functionally, may function as scaffolding protein. Required for normal location of RPGR at the connecting cilium of photoreceptor cells. Required for normal disk morphogenesis and disk organization in the outer segment of photoreceptor cells and for survival of photoreceptor cells. This chain is X-linked retinitis pigmentosa GTPase regulator-interacting protein 1 (RPGRIP1), found in Bos taurus (Bovine).